We begin with the raw amino-acid sequence, 290 residues long: N-acetylmannosamine kinase (290 aa).

ATP contacts are provided by residues 6–13 and 132–139; these read ALDIGGTK and GVGGGIIL. Zn(2+)-binding residues include histidine 156, cysteine 166, cysteine 168, and cysteine 173.

Belongs to the ROK (NagC/XylR) family. NanK subfamily. In terms of assembly, homodimer.

It catalyses the reaction an N-acyl-D-mannosamine + ATP = an N-acyl-D-mannosamine 6-phosphate + ADP + H(+). It functions in the pathway amino-sugar metabolism; N-acetylneuraminate degradation; D-fructose 6-phosphate from N-acetylneuraminate: step 2/5. In terms of biological role, catalyzes the phosphorylation of N-acetylmannosamine (ManNAc) to ManNAc-6-P. The sequence is that of N-acetylmannosamine kinase from Yersinia pseudotuberculosis serotype O:1b (strain IP 31758).